The primary structure comprises 530 residues: Alkyl hydroperoxide reductase subunit F (530 aa).

Position 214-229 (214-229 (DVLVVGGGPAGSAAAV)) interacts with FAD. C344 and C347 are oxidised to a cystine. NAD(+) is bound at residue 356-370 (RVAVIGGGNSGVEAA). 477-487 (TDVPGVFAAGD) contributes to the FAD binding site.

This sequence belongs to the class-II pyridine nucleotide-disulfide oxidoreductase family. In terms of assembly, homodimer. It depends on FAD as a cofactor.

In terms of biological role, serves to protect the cell against DNA damage by alkyl hydroperoxides. It can use either NADH or NADPH as electron donor for direct reduction of redox dyes or of alkyl hydroperoxides when combined with the AhpC protein. This chain is Alkyl hydroperoxide reductase subunit F (ahpF), found in Xanthomonas campestris pv. phaseoli.